The chain runs to 61 residues: Short neurotoxin 1 (61 aa).

4 disulfide bridges follow: Cys-3–Cys-23, Cys-17–Cys-40, Cys-42–Cys-53, and Cys-54–Cys-59.

This sequence belongs to the three-finger toxin family. Short-chain subfamily. Type I alpha-neurotoxin sub-subfamily. As to expression, expressed by the venom gland.

The protein resides in the secreted. Its function is as follows. Binds with high affinity to muscular nicotinic acetylcholine receptors (nAChRs) (tested on Torpedo marmorata AChR, Kd=0.07 nM) and with low affinity to neuronal alpha-7/CHRNA7 nAChRs (tested on chimeric receptor, Kd=3 uM) and inhibit acetylcholine from binding to the receptor, thereby impairing neuromuscular transmission. Produces peripheral paralysis by blocking neuromuscular transmission at the postsynaptic site. In Naja pallida (Red spitting cobra), this protein is Short neurotoxin 1.